Consider the following 46-residue polypeptide: uncharacterized protein (46 aa).

The helical transmembrane segment at histidine 12–leucine 34 threads the bilayer.

Its subcellular location is the cell membrane. This is an uncharacterized protein from Bacillus subtilis (strain 168).